The following is a 359-amino-acid chain: NF-kappa-B inhibitor beta (359 aa).

Phosphoserine; by RPS6KA1 occurs at positions 19 and 23. 6 ANK repeats span residues 57–86 (DGDT…GTEY), 93–122 (LGQT…GVLV), 126–155 (GGHT…SHPR), 206–235 (DGHT…DLNK), 240–269 (CGRT…DPTA), and 273–302 (GGRT…PEPE). The tract at residues 153–192 (HPRDASDTYLTQSQDHTPDTSHAPVATDPQPNPGNEEELR) is disordered. Over residues 298–308 (APEPEDKDDKL) the composition is skewed to basic and acidic residues. Positions 298 to 359 (APEPEDKDDK…KPLPDDPNPA (62 aa)) are disordered. Position 318 is a phosphoserine (Ser-318). Residues 318–331 (SDSDNRDEGDEYDD) show a composition bias toward acidic residues. A compositionally biased stretch (pro residues) spans 342-359 (QPPPSPAAKPLPDDPNPA).

Belongs to the NF-kappa-B inhibitor family. As to quaternary structure, interacts with THRB (via ligand-binding domain). Interacts with RELA and REL. Interacts with COMMD1. Interacts with inhibitor kappa B-interacting Ras-like NKIRAS1 and NKIRAS2. In terms of processing, phosphorylated by RPS6KA1; followed by degradation. Interaction with NKIRAS1 and NKIRAS2 probably prevents phosphorylation.

Its subcellular location is the cytoplasm. It is found in the nucleus. In terms of biological role, inhibits NF-kappa-B by complexing with and trapping it in the cytoplasm. However, the unphosphorylated form resynthesized after cell stimulation is able to bind NF-kappa-B allowing its transport to the nucleus and protecting it to further NFKBIA-dependent inactivation. Association with inhibitor kappa B-interacting NKIRAS1 and NKIRAS2 prevent its phosphorylation rendering it more resistant to degradation, explaining its slower degradation. This is NF-kappa-B inhibitor beta (Nfkbib) from Rattus norvegicus (Rat).